The sequence spans 118 residues: Myotrophin (118 aa).

ANK repeat units lie at residues 1–30 (MGDK…DVNR), 34–65 (GGRK…NAPD), and 67–98 (HGIT…NRKG).

It belongs to the myotrophin family.

Its subcellular location is the cytoplasm. It is found in the nucleus. It localises to the perinuclear region. In terms of biological role, regulates NF-kappa-B transcription factor activity. Promotes growth of cardiomyocytes, but not cardiomyocyte proliferation. Promotes cardiac muscle hypertrophy. Plays a role in the regulation of the growth of actin filaments. Inhibits the activity of the F-actin-capping protein complex. The sequence is that of Myotrophin (mtpn) from Danio rerio (Zebrafish).